Here is a 374-residue protein sequence, read N- to C-terminus: Protein TAB2 homolog, chloroplastic (374 aa).

The transit peptide at 1–64 directs the protein to the chloroplast; that stretch reads MATLGFNTRR…SLSITKEQEV (64 aa). The disordered stretch occupies residues 58–84; it reads ITKEQEVANEVEEDDPTSELSYLDPES. A compositionally biased stretch (acidic residues) spans 64 to 74; sequence VANEVEEDDPT.

The protein resides in the plastid. Its subcellular location is the chloroplast. Its function is as follows. Nuclear genome-encoded A/U-rich RNA-binding protein involved in the biogenesis of photosystem I (PSI) and II (PSII). Required for the light-controlled accumulation of PSI and PSII during early plant development. Does not seem to be required for the translation of mRNAs of the PSI subunits. The polypeptide is Protein TAB2 homolog, chloroplastic (Arabidopsis thaliana (Mouse-ear cress)).